The following is a 354-amino-acid chain: Peptide chain release factor 1 (354 aa).

Glutamine 232 bears the N5-methylglutamine mark.

It belongs to the prokaryotic/mitochondrial release factor family. In terms of processing, methylated by PrmC. Methylation increases the termination efficiency of RF1.

The protein resides in the cytoplasm. Functionally, peptide chain release factor 1 directs the termination of translation in response to the peptide chain termination codons UAG and UAA. This chain is Peptide chain release factor 1, found in Jannaschia sp. (strain CCS1).